A 325-amino-acid polypeptide reads, in one-letter code: Tyrosine phosphatase H2 (325 aa).

Positions 27–295 (VTREHEKIMA…FFCYRVMERY (269 aa)) constitute a Tyrosine-protein phosphatase domain. Cys-236 (phosphocysteine intermediate) is an active-site residue.

Belongs to the protein-tyrosine phosphatase family.

It localises to the host cytoplasm. It carries out the reaction O-phospho-L-tyrosyl-[protein] + H2O = L-tyrosyl-[protein] + phosphate. Its function is as follows. Suppresses host immune cell adhesion and phagocytosis. Triggers host mitochondrial membrane depolarization and caspase-dependent apoptosis. This chain is Tyrosine phosphatase H2 (H2), found in Microplitis demolitor bracovirus (isolate Webb) (MdBV).